Consider the following 396-residue polypeptide: Enoyl-[acyl-carrier-protein] reductase [NADH] (396 aa).

NAD(+)-binding positions include 48 to 53 (GASTGY), 74 to 75 (FE), 111 to 112 (DA), and 139 to 140 (LA). Tyrosine 225 lines the substrate pocket. The active-site Proton donor is the tyrosine 235. Residues lysine 244 and 273-275 (VVT) contribute to the NAD(+) site.

Belongs to the TER reductase family. As to quaternary structure, monomer.

The catalysed reaction is a 2,3-saturated acyl-[ACP] + NAD(+) = a (2E)-enoyl-[ACP] + NADH + H(+). It participates in lipid metabolism; fatty acid biosynthesis. Its function is as follows. Involved in the final reduction of the elongation cycle of fatty acid synthesis (FAS II). Catalyzes the reduction of a carbon-carbon double bond in an enoyl moiety that is covalently linked to an acyl carrier protein (ACP). The sequence is that of Enoyl-[acyl-carrier-protein] reductase [NADH] from Colwellia psychrerythraea (strain 34H / ATCC BAA-681) (Vibrio psychroerythus).